Reading from the N-terminus, the 165-residue chain is MAENQQAAGNENQNQPQFALQRIYVKDLSFESPNSPLVFQEQWKPQVNLDLNTSHNKISDNQYEVVLSLTVTAKVGEKVAYIVEIQQGGVFMISGIEGPQLGQMLGAYCPTILFPYAREAIDGIVNKGSFPALMLAPVNFDAIYAQALKRKQEEAAGEAKEEQTH.

This sequence belongs to the SecB family. In terms of assembly, homotetramer, a dimer of dimers. One homotetramer interacts with 1 SecA dimer.

It localises to the cytoplasm. One of the proteins required for the normal export of preproteins out of the cell cytoplasm. It is a molecular chaperone that binds to a subset of precursor proteins, maintaining them in a translocation-competent state. It also specifically binds to its receptor SecA. This is Protein-export protein SecB from Marinobacter nauticus (strain ATCC 700491 / DSM 11845 / VT8) (Marinobacter aquaeolei).